Here is a 1066-residue protein sequence, read N- to C-terminus: Ubiquitin conjugation factor E4 A (1066 aa).

Positions 35–57 (QLKQQSDELPASPDDSDNSVSES) are disordered. Residue lysine 386 is modified to N6-acetyllysine. Residues 987–1061 (DACDEFLDPI…QRWLAERKQQ (75 aa)) form the U-box domain.

The protein belongs to the ubiquitin conjugation factor E4 family.

It is found in the cytoplasm. It carries out the reaction S-ubiquitinyl-[E2 ubiquitin-conjugating enzyme]-L-cysteine + [acceptor protein]-L-lysine = [E2 ubiquitin-conjugating enzyme]-L-cysteine + N(6)-ubiquitinyl-[acceptor protein]-L-lysine.. It functions in the pathway protein modification; protein ubiquitination. In terms of biological role, ubiquitin-protein ligase that probably functions as an E3 ligase in conjunction with specific E1 and E2 ligases. May also function as an E4 ligase mediating the assembly of polyubiquitin chains on substrates ubiquitinated by another E3 ubiquitin ligase. Mediates 'Lys-48'-linked polyubiquitination of substrates. This Rattus norvegicus (Rat) protein is Ubiquitin conjugation factor E4 A.